The following is a 372-amino-acid chain: Stress-activated protein kinase JNK (372 aa).

The region spanning 24-320 (YINLRPIGSG…VDEALKHEYI (297 aa)) is the Protein kinase domain. Residues 31–36 (GSGAQG) and Lys-53 each bind ATP. Asp-149 functions as the Proton acceptor in the catalytic mechanism. The residue at position 181 (Thr-181) is a Phosphothreonine. Positions 181–183 (TPY) match the TXY motif. The residue at position 183 (Tyr-183) is a Phosphotyrosine.

It belongs to the protein kinase superfamily. CMGC Ser/Thr protein kinase family. MAP kinase subfamily. As to quaternary structure, interacts with MKP-4 (via tyrosine-protein phosphatase domain); the interaction dephosphorylates bsk. Requires Mg(2+) as cofactor. Dually phosphorylated on Thr-181 and Tyr-183, which activates the enzyme. In terms of tissue distribution, during gastrulation, expression is seen in cells undergoing morphogenetic movements. By stage 9 of embryonic development, expression is ubiquitous. At stages 12-14, expression occurs in epidermis and central nervous system. At stage 15, expression is restricted to ventral nerve cord, brain and some peripheral neurons. In larvae, expression is seen in all imaginal disks, with highest levels in wing and eye disks, and in the CNS. Adults express the protein in fat body and hemocytes.

The protein resides in the nucleus. Its subcellular location is the cytoplasm. The enzyme catalyses L-seryl-[protein] + ATP = O-phospho-L-seryl-[protein] + ADP + H(+). It carries out the reaction L-threonyl-[protein] + ATP = O-phospho-L-threonyl-[protein] + ADP + H(+). Activated by threonine and tyrosine phosphorylation by the dual specificity kinase, hep. Inhibited by dual specificity phosphatase, puckered. Mitogen-activated protein kinase and key component of the c-Jun N-terminal kinase (JNK) pathway which phosphorylate and activate transcription factors involved in a wide range of biological processes including response to various stresses, cellular proliferation, differentiation and migration, and regulation of cell shape. Responds to activation by environmental stress by phosphorylating a number of transcription factors, primarily components of AP-1 such as Jra and also the transcriptional repressor aop, and thus regulates transcriptional activity. Component of the immune response activated by bacterial infection, and is involved in wound healing and in dorsal closure, a morphogenetic movement during embryogenesis. Functions in the systematic response to wounding acting downstream of the Hayan-phenoloxidase PPO1 cascade. During epidermal wound healing involved in cellular polarization by inducing the translocation of sktl and mys/integrin beta to the trailing edge. Exhibits cytoprotective activity in neuronal cells in response to wounding to the integument. Controls the expression of a phosphatase, puckered, at the edges of wounded epidermal tissue and in the dorsal epithelium during dorsal closure. Regulates the activity of SREBP in neurons and thereby the accumulation of lipids in glia. Plays a role in positively regulating the expression of DIP2 independently of AP-1, thereby ensuring proper axon guidance in mushroom bodies. In enterocytes and differentiating progenitors of the gut that are experiencing inorganic phosphate (Pi) deficiency, activated by Cka to induce nearby progenitor cells to proliferate and form new absorptive cells, probably helping the organism to cope with the nutrient deficiency by maximizing absorption of dietary Pi. In Drosophila melanogaster (Fruit fly), this protein is Stress-activated protein kinase JNK.